Here is a 504-residue protein sequence, read N- to C-terminus: Cytochrome P450 3A11 (504 aa).

Cys-443 contacts heme.

It belongs to the cytochrome P450 family. The cofactor is heme. As to expression, highly expressed in liver.

The protein localises to the endoplasmic reticulum membrane. It localises to the microsome membrane. The enzyme catalyses an organic molecule + reduced [NADPH--hemoprotein reductase] + O2 = an alcohol + oxidized [NADPH--hemoprotein reductase] + H2O + H(+). In terms of biological role, catalyzes erythromycin N-demethylation, nifedipine oxidation and testosterone 6 beta-hydroxylation. The chain is Cytochrome P450 3A11 (Cyp3a11) from Mus musculus (Mouse).